Here is a 665-residue protein sequence, read N- to C-terminus: GRB2-associated-binding protein 2 (665 aa).

S2 is subject to Phosphoserine. The region spanning D8–G119 is the PH domain. Positions R131–T184 are disordered. A phosphoserine mark is found at S135, S142, S143, S149, S150, S160, S165, S211, S220, and S261. Residues S160 to L170 are compositionally biased toward polar residues. Position 262 is a phosphothreonine (T262). Phosphotyrosine is present on Y263. T275 bears the Phosphothreonine mark. Phosphoserine is present on residues S278 and S282. T284 bears the Phosphothreonine mark. Y290 is modified (phosphotyrosine). T328 is modified (phosphothreonine). Residues V338–R396 are disordered. An SH3-binding motif is present at residues P348–P355. Over residues Q357–V379 the composition is skewed to polar residues. S365 is subject to Phosphoserine. Residues T382 and T388 each carry the phosphothreonine modification. S402 is subject to Phosphoserine. T405 is subject to Phosphothreonine. Residues Y408–N445 form a disordered region. S420 bears the Phosphoserine mark. A compositionally biased stretch (polar residues) spans G430–D439. Y441 is subject to Phosphotyrosine. Residue S469 is modified to Phosphoserine. The interval P491–L517 is disordered. The short motif at P499–P508 is the SH3-binding element. A Phosphoserine modification is found at S532. Polar residues-rich tracts occupy residues S548–S566 and N578–S600. Disordered stretches follow at residues S548 to Y632 and T646 to L665. S612 carries the post-translational modification Phosphoserine. Y632 is modified (phosphotyrosine). A compositionally biased stretch (polar residues) spans T646–P659.

This sequence belongs to the GAB family. Part of a complex composed of EEIG1, TNFRSF11A/RANK, PLCG2, GAB2, TEC and BTK; complex formation increases in the presence of TNFSF11/RANKL. Interacts with HCK. Interacts with SHC1; may mediate interaction with receptors. Interacts with SYK. Interacts with PI-3 kinase. Interacts with GRB2 (via SH3 2 domain). Interacts (phosphorylated) with PTPN11. Interacts with TNFRSF11A (via cytoplasmic domain). Interacts (phosphorylated) with 14-3-3 family proteins SFN, YWHAB, YWHAE, YWHAG, YWHAH, YWHAQ and YWHAZ; prevents interaction with GRB2 and attenuates GAB2 signaling. Phosphorylated upon EGF stimulation. Phosphorylated on tyrosine residues by HCK upon IL6 signaling. Phosphorylated on tyrosine residue(s) by the thrombopoietin receptor (TPOR), stem cell factor receptor (SCFR), and T-cell and B-cell antigen receptors, gp130, IL-2R and IL-3R. Phosphorylated upon stimulation of TNFRSF11A/RANK by TNFSF11/RANKL. Post-translationally, dephosphorylated by PTPN11. Ubiquitously expressed.

It localises to the cytoplasm. The protein localises to the cell membrane. Its subcellular location is the membrane raft. In terms of biological role, adapter protein which acts downstream of several membrane receptors including cytokine, antigen, hormone, cell matrix and growth factor receptors to regulate multiple signaling pathways. Regulates osteoclast differentiation mediating the TNFRSF11A/RANK signaling. In allergic response, it plays a role in mast cells activation and degranulation through PI-3-kinase regulation. Also involved in the regulation of cell proliferation and hematopoiesis. This is GRB2-associated-binding protein 2 (Gab2) from Mus musculus (Mouse).